We begin with the raw amino-acid sequence, 881 residues long: Alanine--tRNA ligase (881 aa).

4 residues coordinate Zn(2+): H568, H572, C670, and H674.

It belongs to the class-II aminoacyl-tRNA synthetase family. It depends on Zn(2+) as a cofactor.

The protein localises to the cytoplasm. It carries out the reaction tRNA(Ala) + L-alanine + ATP = L-alanyl-tRNA(Ala) + AMP + diphosphate. Catalyzes the attachment of alanine to tRNA(Ala) in a two-step reaction: alanine is first activated by ATP to form Ala-AMP and then transferred to the acceptor end of tRNA(Ala). Also edits incorrectly charged Ser-tRNA(Ala) and Gly-tRNA(Ala) via its editing domain. This is Alanine--tRNA ligase from Clostridium acetobutylicum (strain ATCC 824 / DSM 792 / JCM 1419 / IAM 19013 / LMG 5710 / NBRC 13948 / NRRL B-527 / VKM B-1787 / 2291 / W).